A 71-amino-acid polypeptide reads, in one-letter code: Small ribosomal subunit protein bS21 (71 aa).

It belongs to the bacterial ribosomal protein bS21 family.

This is Small ribosomal subunit protein bS21 from Cellvibrio japonicus (strain Ueda107) (Pseudomonas fluorescens subsp. cellulosa).